Here is a 461-residue protein sequence, read N- to C-terminus: Bifunctional protein GlmU (461 aa).

The interval 1–229 (MNKYVVILAA…FSESLGVNDR (229 aa)) is pyrophosphorylase. UDP-N-acetyl-alpha-D-glucosamine-binding positions include 8 to 11 (LAAG), Lys-22, Gln-72, and 77 to 78 (GT). Asp-102 serves as a coordination point for Mg(2+). Positions 139, 154, 169, and 227 each coordinate UDP-N-acetyl-alpha-D-glucosamine. Asn-227 serves as a coordination point for Mg(2+). Residues 230 to 250 (IALAQATKIMQRRINEEHMKN) form a linker region. The segment at 251–461 (GVSFIDPDTA…LPLSKDKEWE (211 aa)) is N-acetyltransferase. Arg-332 and Lys-350 together coordinate UDP-N-acetyl-alpha-D-glucosamine. His-362 acts as the Proton acceptor in catalysis. Tyr-365 and Asn-376 together coordinate UDP-N-acetyl-alpha-D-glucosamine. Residues 385-386 (NY), Ala-422, and Arg-439 contribute to the acetyl-CoA site.

The protein in the N-terminal section; belongs to the N-acetylglucosamine-1-phosphate uridyltransferase family. This sequence in the C-terminal section; belongs to the transferase hexapeptide repeat family. As to quaternary structure, homotrimer. Mg(2+) serves as cofactor.

The protein localises to the cytoplasm. It catalyses the reaction alpha-D-glucosamine 1-phosphate + acetyl-CoA = N-acetyl-alpha-D-glucosamine 1-phosphate + CoA + H(+). The enzyme catalyses N-acetyl-alpha-D-glucosamine 1-phosphate + UTP + H(+) = UDP-N-acetyl-alpha-D-glucosamine + diphosphate. Its pathway is nucleotide-sugar biosynthesis; UDP-N-acetyl-alpha-D-glucosamine biosynthesis; N-acetyl-alpha-D-glucosamine 1-phosphate from alpha-D-glucosamine 6-phosphate (route II): step 2/2. It participates in nucleotide-sugar biosynthesis; UDP-N-acetyl-alpha-D-glucosamine biosynthesis; UDP-N-acetyl-alpha-D-glucosamine from N-acetyl-alpha-D-glucosamine 1-phosphate: step 1/1. It functions in the pathway bacterial outer membrane biogenesis; LPS lipid A biosynthesis. Its function is as follows. Catalyzes the last two sequential reactions in the de novo biosynthetic pathway for UDP-N-acetylglucosamine (UDP-GlcNAc). The C-terminal domain catalyzes the transfer of acetyl group from acetyl coenzyme A to glucosamine-1-phosphate (GlcN-1-P) to produce N-acetylglucosamine-1-phosphate (GlcNAc-1-P), which is converted into UDP-GlcNAc by the transfer of uridine 5-monophosphate (from uridine 5-triphosphate), a reaction catalyzed by the N-terminal domain. This chain is Bifunctional protein GlmU, found in Lactobacillus gasseri (strain ATCC 33323 / DSM 20243 / BCRC 14619 / CIP 102991 / JCM 1131 / KCTC 3163 / NCIMB 11718 / NCTC 13722 / AM63).